The primary structure comprises 186 residues: Translation initiation factor IF-3 (186 aa).

Belongs to the IF-3 family. Monomer.

The protein localises to the cytoplasm. Functionally, IF-3 binds to the 30S ribosomal subunit and shifts the equilibrium between 70S ribosomes and their 50S and 30S subunits in favor of the free subunits, thus enhancing the availability of 30S subunits on which protein synthesis initiation begins. This Borreliella burgdorferi (strain ATCC 35210 / DSM 4680 / CIP 102532 / B31) (Borrelia burgdorferi) protein is Translation initiation factor IF-3.